Consider the following 500-residue polypeptide: MSRSLTGALAHSFLGQSPRWYKAVIALFLVLNPLLLATLGPVVTGWVLVIQFIFTLGMALKCYPLMPGGLLLVEALLLRMTTPEALYEELQHNFPVILLLMFMVAGIHFMKELLLFLFSRILLGVRSKAVLSLLFCVLSAFLSAFLDALTVTAVIISAAVGFYAVYHRVASGTNPREESALDSDHQVEQLHREDLDQFRAFLRSLLMHGAVGTALGGVCTLVGEPQNLLIGHEMGWHFADFFLKVAPVSMPVLAAGLVTCVLLEKLRLFGYGTLMPERVRQVLAAYAAEDDAARTQAQRIALVVQGLAALILIVCLGLHIAEVGLIGLMVIVLITAFTGITDEHRLGRAFQDAMPFTALLVVFFAVVAVIHQQQLFSPLIAWVLALPSEQQPGMLYLANGLLSAISDNVFVATIYITEVKQAFVNGAMSREHFETLAVAINTGTNLPSVATPNGQAAFLFLLTSAIAPLIRLSYGRMVWMALPYTVVMGGLGWWAVTYWL.

A run of 12 helical transmembrane segments spans residues 34–54 (LLLA…QFIF), 58–78 (MALK…ALLL), 96–116 (VILL…LLLF), 129–149 (AVLS…LDAL), 150–170 (TVTA…HRVA), 205–225 (LLMH…VGEP), 241–261 (FFLK…VTCV), 311–331 (ILIV…LMVI), 350–370 (FQDA…VAVI), 394–414 (MLYL…VATI), 450–470 (ATPN…APLI), and 477–497 (MVWM…WAVT).

This sequence belongs to the NhaB Na(+)/H(+) (TC 2.A.34) antiporter family.

It localises to the cell inner membrane. It carries out the reaction 2 Na(+)(in) + 3 H(+)(out) = 2 Na(+)(out) + 3 H(+)(in). In terms of biological role, na(+)/H(+) antiporter that extrudes sodium in exchange for external protons. The protein is Na(+)/H(+) antiporter NhaB of Pseudomonas entomophila (strain L48).